Consider the following 215-residue polypeptide: Ras-related protein Rab-5A (215 aa).

Positions 29, 30, 32, 33, 34, 35, 46, 47, 52, and 78 each coordinate GTP. Serine 34 is a binding site for Mg(2+). Short sequence motifs (switch) lie at residues 44–56 (QFHE…IGAA) and 77–93 (AGQE…YRGA). Threonine 52 is a binding site for Mg(2+). Serine 84 bears the Phosphoserine mark. Residues asparagine 133, lysine 134, aspartate 136, alanine 164, and lysine 165 each coordinate GTP. Positions 181–215 (LPKNEPQNPGANSARGRGVDLTEPTQPTRSQCCSN) are disordered. Polar residues predominate over residues 203–215 (EPTQPTRSQCCSN). S-geranylgeranyl cysteine attachment occurs at residues cysteine 212 and cysteine 213.

It belongs to the small GTPase superfamily. Rab family. Interacts with GDI1; this promotes dissociation from membranes; phosphorylation at Ser-84 disrupts this interaction. Interacts with GDI2; phosphorylation at Ser-84 disrupts the interaction. Binds EEA1. Interacts with ALS2CL, SUN2, ZFYVE20 and RUFY1. Interacts with RIN1 and GAPVD1, which regulate its pathway, probably by acting as a GEF. Interacts with SGSM1 and SGSM3. Interacts with PIK3CB. Interacts with RABEP1 and RINL. Interacts with OCRL and INPP5F. May be a component of a complex composed of RAB5A, DYN2 and PIK3C3. Does not interact with the BLOC-3 complex (heterodimer of HPS1 and HPS4). Interacts with CLN5. Interacts with APPL2. Interacts with F8A1/F8A2/F8A3. Found in a complex with F8A1/F8A2/F8A3, HTT and RAB5A; mediates the recruitment of HTT by RAB5A onto early endosomes. Interacts with ATP9A. Interacts with PPP1R21; mediates the recruitment of FERRY complex by RAB5A onto early endosomes. It depends on Mg(2+) as a cofactor. Post-translationally, phosphorylation of Ser-84 in the switch II region by LRRK2 prevents the association of RAB regulatory proteins, including RAB GDP dissociation inhibitors GDI1 and GDI2.

The protein localises to the cell membrane. Its subcellular location is the early endosome membrane. It is found in the melanosome. It localises to the cytoplasmic vesicle. The protein resides in the cell projection. The protein localises to the ruffle. Its subcellular location is the cytoplasm. It is found in the cytosol. It localises to the membrane. The protein resides in the phagosome membrane. The protein localises to the endosome membrane. It catalyses the reaction GTP + H2O = GDP + phosphate + H(+). Regulated by guanine nucleotide exchange factors (GEFs) including RINL, which promote the exchange of bound GDP for free GTP. Regulated by GTPase activating proteins (GAPs) which increase the GTP hydrolysis activity. Inhibited by GDP dissociation inhibitors (GDIs). The small GTPases Rab are key regulators of intracellular membrane trafficking, from the formation of transport vesicles to their fusion with membranes. Rabs cycle between an inactive GDP-bound form and an active GTP-bound form that is able to recruit to membranes different sets of downstream effectors directly responsible for vesicle formation, movement, tethering and fusion. RAB5A is required for the fusion of plasma membranes and early endosomes. Contributes to the regulation of filopodia extension. Required for the exosomal release of SDCBP, CD63, PDCD6IP and syndecan. Regulates maturation of apoptotic cell-containing phagosomes, probably downstream of DYN2 and PIK3C3. The polypeptide is Ras-related protein Rab-5A (RAB5A) (Canis lupus familiaris (Dog)).